We begin with the raw amino-acid sequence, 366 residues long: Patr class I histocompatibility antigen, C alpha chain (366 aa).

The N-terminal stretch at 1-24 (MRVTAPRTLLLLLSGGLALTETWA) is a signal peptide. The interval 25-114 (GSHSLRYFDT…LRGYYNQSED (90 aa)) is alpha-1. The Extracellular segment spans residues 25–308 (GSHSLRYFDT…KPTSQPTIPI (284 aa)). An N-linked (GlcNAc...) asparagine glycan is attached at N110. The alpha-2 stretch occupies residues 115–206 (GSHTLQWMYG…ENGKETLQRT (92 aa)). 2 cysteine pairs are disulfide-bonded: C125-C192 and C227-C283. The interval 207–298 (ECPKTHMTHH…GLPEPLTLRW (92 aa)) is alpha-3. One can recognise an Ig-like C1-type domain in the interval 209 to 297 (PKTHMTHHPV…EGLPEPLTLR (89 aa)). The connecting peptide stretch occupies residues 299–308 (KPTSQPTIPI). Residues 309 to 332 (VGIVAGLAVLAVLAVLGAVVTAMM) form a helical membrane-spanning segment. The Cytoplasmic portion of the chain corresponds to 333–366 (CRRKSSGGKGGSCSQAACSNSAQGSDESLIACKA). A phosphoserine mark is found at S357 and S360.

This sequence belongs to the MHC class I family. In terms of assembly, heterodimer of an alpha chain and a beta chain (beta-2-microglobulin).

It localises to the membrane. In terms of biological role, involved in the presentation of foreign antigens to the immune system. The chain is Patr class I histocompatibility antigen, C alpha chain from Pan troglodytes (Chimpanzee).